The sequence spans 353 residues: Holliday junction branch migration complex subunit RuvB (353 aa).

Residues 4-190 (HYIRFKIMTN…FGIPMRLNFY (187 aa)) are large ATPase domain (RuvB-L). ATP contacts are provided by residues I29, R30, G71, K74, T75, T76, 137 to 139 (EDF), R180, Y190, and R227. T75 contacts Mg(2+). Positions 191–261 (NTEELKKVLN…ISDFGLNRLE (71 aa)) are small ATPAse domain (RuvB-S). The tract at residues 264–353 (RIGLDSNDYR…HQFNIFNEHE (90 aa)) is head domain (RuvB-H). 3 residues coordinate DNA: R300, R319, and R324.

This sequence belongs to the RuvB family. As to quaternary structure, homohexamer. Forms an RuvA(8)-RuvB(12)-Holliday junction (HJ) complex. HJ DNA is sandwiched between 2 RuvA tetramers; dsDNA enters through RuvA and exits via RuvB. An RuvB hexamer assembles on each DNA strand where it exits the tetramer. Each RuvB hexamer is contacted by two RuvA subunits (via domain III) on 2 adjacent RuvB subunits; this complex drives branch migration. In the full resolvosome a probable DNA-RuvA(4)-RuvB(12)-RuvC(2) complex forms which resolves the HJ.

Its subcellular location is the cytoplasm. It carries out the reaction ATP + H2O = ADP + phosphate + H(+). The RuvA-RuvB-RuvC complex processes Holliday junction (HJ) DNA during genetic recombination and DNA repair, while the RuvA-RuvB complex plays an important role in the rescue of blocked DNA replication forks via replication fork reversal (RFR). RuvA specifically binds to HJ cruciform DNA, conferring on it an open structure. The RuvB hexamer acts as an ATP-dependent pump, pulling dsDNA into and through the RuvAB complex. RuvB forms 2 homohexamers on either side of HJ DNA bound by 1 or 2 RuvA tetramers; 4 subunits per hexamer contact DNA at a time. Coordinated motions by a converter formed by DNA-disengaged RuvB subunits stimulates ATP hydrolysis and nucleotide exchange. Immobilization of the converter enables RuvB to convert the ATP-contained energy into a lever motion, pulling 2 nucleotides of DNA out of the RuvA tetramer per ATP hydrolyzed, thus driving DNA branch migration. The RuvB motors rotate together with the DNA substrate, which together with the progressing nucleotide cycle form the mechanistic basis for DNA recombination by continuous HJ branch migration. Branch migration allows RuvC to scan DNA until it finds its consensus sequence, where it cleaves and resolves cruciform DNA. This is Holliday junction branch migration complex subunit RuvB from Rickettsia massiliae (strain Mtu5).